Reading from the N-terminus, the 230-residue chain is Small ribosomal subunit protein uS3 (230 aa).

The 69-residue stretch at 39-107 (VRKYLADKLQ…PAQINIAEIR (69 aa)) folds into the KH type-2 domain.

It belongs to the universal ribosomal protein uS3 family. As to quaternary structure, part of the 30S ribosomal subunit. Forms a tight complex with proteins S10 and S14.

Functionally, binds the lower part of the 30S subunit head. Binds mRNA in the 70S ribosome, positioning it for translation. The polypeptide is Small ribosomal subunit protein uS3 (Shewanella oneidensis (strain ATCC 700550 / JCM 31522 / CIP 106686 / LMG 19005 / NCIMB 14063 / MR-1)).